Consider the following 443-residue polypeptide: Trimethylamine monooxygenase (443 aa).

Asp37, Gln39, Leu45, and Trp46 together coordinate FAD. NADP(+)-binding residues include Trp70 and Asn72. Residues Asn72 and Val125 each contribute to the FAD site. Positions 170, 202, 203, 205, and 226 each coordinate NADP(+). The FAD site is built by Gln315 and Thr318. Arg409 provides a ligand contact to NADP(+).

This sequence belongs to the FMO family. It depends on FAD as a cofactor.

The enzyme catalyses trimethylamine + NADPH + O2 = trimethylamine N-oxide + NADP(+) + H2O. Its function is as follows. Catalyzes the oxidation of trimethylamine (TMA) to produce trimethylamine N-oxide (TMAO). In vitro, has a broad substrate specificity, oxidizing many nitrogen- and sulfur-containing compounds, including dimethylamine (DMA), dimethylsulfide (DMS) and dimethylsulfoxide (DMSO). The polypeptide is Trimethylamine monooxygenase (Pelagibacter ubique (strain HTCC1002)).